The sequence spans 234 residues: UPF0502 protein Reut_B4455 (234 aa).

It belongs to the UPF0502 family.

The protein is UPF0502 protein Reut_B4455 of Cupriavidus pinatubonensis (strain JMP 134 / LMG 1197) (Cupriavidus necator (strain JMP 134)).